Reading from the N-terminus, the 429-residue chain is UDP-N-acetylglucosamine 1-carboxyvinyltransferase 2 (429 aa).

Residue 22–23 (KN) participates in phosphoenolpyruvate binding. R93 contributes to the UDP-N-acetyl-alpha-D-glucosamine binding site. C117 serves as the catalytic Proton donor. C117 bears the 2-(S-cysteinyl)pyruvic acid O-phosphothioketal mark. Residues 122 to 126 (RPIDQ), D305, and I327 each bind UDP-N-acetyl-alpha-D-glucosamine.

This sequence belongs to the EPSP synthase family. MurA subfamily.

Its subcellular location is the cytoplasm. It catalyses the reaction phosphoenolpyruvate + UDP-N-acetyl-alpha-D-glucosamine = UDP-N-acetyl-3-O-(1-carboxyvinyl)-alpha-D-glucosamine + phosphate. Its pathway is cell wall biogenesis; peptidoglycan biosynthesis. Cell wall formation. Adds enolpyruvyl to UDP-N-acetylglucosamine. This Bacillus anthracis protein is UDP-N-acetylglucosamine 1-carboxyvinyltransferase 2.